The primary structure comprises 289 residues: ATP synthase gamma chain (289 aa).

The protein belongs to the ATPase gamma chain family. In terms of assembly, F-type ATPases have 2 components, CF(1) - the catalytic core - and CF(0) - the membrane proton channel. CF(1) has five subunits: alpha(3), beta(3), gamma(1), delta(1), epsilon(1). CF(0) has three main subunits: a, b and c.

It is found in the cell inner membrane. Functionally, produces ATP from ADP in the presence of a proton gradient across the membrane. The gamma chain is believed to be important in regulating ATPase activity and the flow of protons through the CF(0) complex. The chain is ATP synthase gamma chain from Leptospira biflexa serovar Patoc (strain Patoc 1 / ATCC 23582 / Paris).